The chain runs to 253 residues: Electron transfer flavoprotein subunit beta, mitochondrial (253 aa).

It belongs to the ETF beta-subunit/FixA family. Heterodimer of an alpha and a beta subunit. FAD serves as cofactor. The cofactor is AMP.

Its subcellular location is the mitochondrion matrix. Functionally, the electron transfer flavoprotein serves as a specific electron acceptor for several dehydrogenases, including five acyl-CoA dehydrogenases, glutaryl-CoA and sarcosine dehydrogenase. It transfers the electrons to the main mitochondrial respiratory chain via ETF-ubiquinone oxidoreductase (ETF dehydrogenase). This is Electron transfer flavoprotein subunit beta, mitochondrial (ETFB) from Oryza sativa subsp. indica (Rice).